Reading from the N-terminus, the 701-residue chain is Long chain acyl-CoA synthetase 6, peroxisomal (701 aa).

The propeptide at 1-38 is removed in mature form; the sequence is MDSSSSSSSAAARRRINAIHSHLVTSSRSSPLLRSNPT. The Microbody targeting signal motif lies at 15–23; sequence RINAIHSHL. 266-277 contributes to the ATP binding site; sequence ICYTSGTTGTPK. Positions 526–550 are fatty acid-binding; the sequence is DGWLHTGDIGLWLPGGRLKIIDRKK.

The protein belongs to the ATP-dependent AMP-binding enzyme family. Mg(2+) is required as a cofactor. As to expression, expressed in roots, stems, leaves flowers and germinating seedling. Preferentially expressed in seeds and senescent leaves.

Its subcellular location is the peroxisome. The protein localises to the glyoxysome membrane. The catalysed reaction is a long-chain fatty acid + ATP + CoA = a long-chain fatty acyl-CoA + AMP + diphosphate. It catalyses the reaction tetradecanoate + ATP + CoA = tetradecanoyl-CoA + AMP + diphosphate. It carries out the reaction hexadecanoate + ATP + CoA = hexadecanoyl-CoA + AMP + diphosphate. The enzyme catalyses (9Z)-octadecenoate + ATP + CoA = (9Z)-octadecenoyl-CoA + AMP + diphosphate. The catalysed reaction is (9Z,12Z)-octadecadienoate + ATP + CoA = (9Z,12Z)-octadecadienoyl-CoA + AMP + diphosphate. It catalyses the reaction (9Z,12Z,15Z)-octadecatrienoate + ATP + CoA = (9Z,12Z,15Z)-octadecatrienoyl-CoA + AMP + diphosphate. It functions in the pathway lipid metabolism; fatty acid metabolism. Activation of long-chain fatty acids for both synthesis of cellular lipids, and degradation via beta-oxidation. Preferentially uses palmitate, palmitoleate, oleate, linoleate and eicosenoate as substrates. Can use myristate and linolenate as substrates. May play a regulatory role both in fatty acid import into glyoxysomes and in fatty acid beta-oxidation. Functions redundantly with LACS7 in lipid mobilization for beta-oxidation during seed germination, which is essential for postgerminative growth and seedling establishment. This chain is Long chain acyl-CoA synthetase 6, peroxisomal, found in Arabidopsis thaliana (Mouse-ear cress).